A 532-amino-acid polypeptide reads, in one-letter code: Intercellular adhesion molecule 1 (532 aa).

Positions Met-1 to Ala-27 are cleaved as a signal peptide. The Extracellular portion of the chain corresponds to Gln-28–Glu-480. 2 Ig-like C2-type domains span residues Gly-41–Ala-103 and Gly-128–Arg-193. 3 cysteine pairs are disulfide-bonded: Cys-48-Cys-92, Cys-52-Cys-96, and Cys-135-Cys-186. Asn-145 is a glycosylation site (N-linked (GlcNAc...) asparagine). A Cell attachment site; atypical motif is present at residues Arg-152–Glu-154. Asn-183, Asn-202, Asn-267, and Asn-296 each carry an N-linked (GlcNAc...) asparagine glycan. Ig-like C2-type domains are found at residues Asp-230–Gln-297 and Gly-325–Ala-378. Residues Cys-237 and Cys-290 are joined by a disulfide bond. Cys-332 and Cys-371 form a disulfide bridge. N-linked (GlcNAc...) asparagine glycans are attached at residues Asn-385 and Asn-406. 3 cysteine pairs are disulfide-bonded: Cys-403–Cys-419, Cys-419–Cys-457, and Cys-431–Cys-457. The Ig-like C2-type 5 domain occupies Asn-412 to Gly-464. The chain crosses the membrane as a helical span at residues Ile-481–Tyr-503. At Asn-504–Pro-532 the chain is on the cytoplasmic side. Phosphothreonine occurs at positions 521 and 530.

It belongs to the immunoglobulin superfamily. ICAM family. Homodimer. Interacts with MUC1 and promotes cell aggregation in epithelial cells. Interacts with ARHGEF26/SGEF. Interacts (on T cell side) with CD81, CD247 and CD9 at immunological synapses between antigen-presenting cells and T cells. Monoubiquitinated, which is promoted by MARCH9 and leads to endocytosis.

The protein resides in the membrane. In terms of biological role, ICAM proteins are ligands for the leukocyte adhesion protein LFA-1 (integrin alpha-L/beta-2). During leukocyte trans-endothelial migration, ICAM1 engagement promotes the assembly of endothelial apical cups through ARHGEF26/SGEF and RHOG activation. The polypeptide is Intercellular adhesion molecule 1 (ICAM1) (Pan troglodytes (Chimpanzee)).